Reading from the N-terminus, the 339-residue chain is Glycerol-3-phosphate dehydrogenase [NAD(P)+] (339 aa).

The NADPH site is built by Ser31, Trp32, Arg52, and Lys122. 2 residues coordinate sn-glycerol 3-phosphate: Lys122 and Gly152. Residue Ala156 coordinates NADPH. Sn-glycerol 3-phosphate-binding residues include Lys207, Asp260, Ser270, Arg271, and Asn272. Lys207 serves as the catalytic Proton acceptor. Arg271 contributes to the NADPH binding site. An NADPH-binding site is contributed by Glu293.

The protein belongs to the NAD-dependent glycerol-3-phosphate dehydrogenase family.

It localises to the cytoplasm. It carries out the reaction sn-glycerol 3-phosphate + NAD(+) = dihydroxyacetone phosphate + NADH + H(+). The catalysed reaction is sn-glycerol 3-phosphate + NADP(+) = dihydroxyacetone phosphate + NADPH + H(+). It functions in the pathway membrane lipid metabolism; glycerophospholipid metabolism. Its function is as follows. Catalyzes the reduction of the glycolytic intermediate dihydroxyacetone phosphate (DHAP) to sn-glycerol 3-phosphate (G3P), the key precursor for phospholipid synthesis. The polypeptide is Glycerol-3-phosphate dehydrogenase [NAD(P)+] (Tropheryma whipplei (strain Twist) (Whipple's bacillus)).